An 800-amino-acid chain; its full sequence is Phenylalanine--tRNA ligase beta subunit (800 aa).

A tRNA-binding domain is found at 39–154; the sequence is TKDIKKLVVG…EAVKPGTDAL (116 aa). The 76-residue stretch at 408–483 folds into the B5 domain; that stretch reads SFVTPIEITA…RIYGYDEIPS (76 aa). Aspartate 461, aspartate 467, glutamate 470, and glutamate 471 together coordinate Mg(2+). Residues 708 to 800 enclose the FDX-ACB domain; sequence PRFPGVTRDI…ALKKHGAIIR (93 aa).

Belongs to the phenylalanyl-tRNA synthetase beta subunit family. Type 1 subfamily. Tetramer of two alpha and two beta subunits. It depends on Mg(2+) as a cofactor.

It localises to the cytoplasm. It carries out the reaction tRNA(Phe) + L-phenylalanine + ATP = L-phenylalanyl-tRNA(Phe) + AMP + diphosphate + H(+). This chain is Phenylalanine--tRNA ligase beta subunit, found in Staphylococcus epidermidis (strain ATCC 12228 / FDA PCI 1200).